We begin with the raw amino-acid sequence, 154 residues long: 6,7-dimethyl-8-ribityllumazine synthase (154 aa).

5-amino-6-(D-ribitylamino)uracil is bound by residues phenylalanine 22, 56 to 58, and 80 to 82; these read AFE and AVI. Position 85 to 86 (85 to 86) interacts with (2S)-2-hydroxy-3-oxobutyl phosphate; the sequence is AT. The Proton donor role is filled by histidine 88. Phenylalanine 113 contributes to the 5-amino-6-(D-ribitylamino)uracil binding site. A (2S)-2-hydroxy-3-oxobutyl phosphate-binding site is contributed by arginine 127.

This sequence belongs to the DMRL synthase family.

It carries out the reaction (2S)-2-hydroxy-3-oxobutyl phosphate + 5-amino-6-(D-ribitylamino)uracil = 6,7-dimethyl-8-(1-D-ribityl)lumazine + phosphate + 2 H2O + H(+). It participates in cofactor biosynthesis; riboflavin biosynthesis; riboflavin from 2-hydroxy-3-oxobutyl phosphate and 5-amino-6-(D-ribitylamino)uracil: step 1/2. Catalyzes the formation of 6,7-dimethyl-8-ribityllumazine by condensation of 5-amino-6-(D-ribitylamino)uracil with 3,4-dihydroxy-2-butanone 4-phosphate. This is the penultimate step in the biosynthesis of riboflavin. The chain is 6,7-dimethyl-8-ribityllumazine synthase from Clostridium botulinum (strain ATCC 19397 / Type A).